A 28-amino-acid chain; its full sequence is Taicatoxin, alpha-neurotoxin-like component (28 aa).

Cys3 and Cys21 are joined by a disulfide.

It belongs to the three-finger toxin family. Long-chain subfamily. Type II alpha-neurotoxin sub-subfamily. Heterotrimer composed of this alpha-neurotoxin-like peptide of 8 kDa, a neurotoxic phospholipase of 16 kDa (AC Q7LZG2) and a serine protease inhibitor of 7 kDa (AC B7S4N9) at an approximate stoichiometry of 1:1:4; non-covalently linked. Expressed by the venom gland.

The protein resides in the secreted. Functionally, the heterotrimer blocks the voltage-dependent L-type calcium channels (Cav1/CACNA1) from the heart, and the small conductance calcium-activated potassium channels (KCa2/KCNN) in the chromaffin cells and in the brain. Is very toxic to mice. The polypeptide is Taicatoxin, alpha-neurotoxin-like component (Oxyuranus scutellatus scutellatus (Australian taipan)).